The sequence spans 873 residues: Inner centromere protein A (873 aa).

7 disordered regions span residues 50 to 124 (AEPE…KRMT), 237 to 270 (PANEQQLNLSNQSATPTGSKSDRRSVRRSLVVRK), 282 to 452 (FSLA…PPPH), 484 to 535 (KRNT…KVRR), 566 to 649 (QIDE…LAEQ), 683 to 736 (LERA…EQAA), and 781 to 800 (DLNSDDSTDDESQPRKPIPA). A compositionally biased stretch (basic residues) spans 60–69 (SQKRRRKKRT). Low complexity predominate over residues 87–105 (RQSNASWSSSVRRLSVRNQ). Over residues 239–254 (NEQQLNLSNQSATPTG) the composition is skewed to polar residues. Residues 261 to 270 (SVRRSLVVRK) show a composition bias toward basic residues. Residues 286-297 (SKRESMTREAVR) are compositionally biased toward basic and acidic residues. Low complexity predominate over residues 314–325 (SSTSSQRSYQSS). The segment covering 437-452 (PSPPCPPSKIVRPPPH) has biased composition (pro residues). Basic and acidic residues-rich tracts occupy residues 491-535 (TDPK…KVRR), 566-584 (QIDEKSEKVREDRMAEEKA), 591-649 (KKQE…LAEQ), and 683-733 (LERA…KAKE). The interval 494–707 (KTEEKERQRL…EERKKREQQE (214 aa)) is SAH. An IN box region spans residues 782–856 (LNSDDSTDDE…RTSSAVWHSP (75 aa)). Phosphoserine is present on residues Ser-849 and Ser-850.

Belongs to the INCENP family. In terms of assembly, component of the CPC composed of survivin/birc5, incenp, cdca8/borealin and/or cdca9/dasra-A, and aurkb/aurora-B. Interacts (via C-terminus) with aurkb (via N-terminus and kinase domain). Interacts (via N-terminus) with birc5.1, birc5.2, cdca8 and cdca9. Interacts with mtus1.

It is found in the nucleus. The protein resides in the chromosome. It localises to the centromere. Its subcellular location is the cytoplasm. The protein localises to the cytoskeleton. It is found in the spindle. The protein resides in the midbody. It localises to the kinetochore. Functionally, component of the chromosomal passenger complex (CPC), a complex that acts as a key regulator of mitosis. The CPC complex has essential functions at the centromere in ensuring correct chromosome alignment and segregation and is required for chromatin-induced microtubule stabilization and spindle assembly. Acts as a scaffold regulating CPC localization and activity. The C-terminus associates with aurkb/aurora-B, the N-terminus associated with cdca8/borealin and/or cdca9/dasra-A tethers the CPC to the inner centromere, and the microtubule binding activity within the central SAH domain directs aurkb/aurora-B toward substrates near microtubules. Activates aurkb. In Xenopus laevis (African clawed frog), this protein is Inner centromere protein A (incenp-a).